The sequence spans 130 residues: MLGGSSDAGLATAAARGQVETVRQLLEAGADPNALNRFGRRPIQVMMMGSAQVAELLLLHGAEPNCADPATLTRPVHDAAREGFLDTLVVLHRAGARLDVCDAWGRLPVDLAEEQGHRDIARYLHAATGD.

4 ANK repeats span residues 5 to 34 (SSDAGLATAAARGQVETVRQLLEAGADPNA), 38 to 66 (FGRRPIQVMMMGSAQVAELLLLHGAEPNC), 71 to 100 (TLTRPVHDAAREGFLDTLVVLHRAGARLDV), and 104 to 130 (WGRLPVDLAEEQGHRDIARYLHAATGD). Residue Thr-12 is modified to Phosphothreonine.

This sequence belongs to the CDKN2 cyclin-dependent kinase inhibitor family. Heterodimer of CDKN2B with CDK4 or CDK6. Expressed ubiquitously.

Interacts strongly with CDK4 and CDK6. Potent inhibitor. Potential effector of TGF-beta induced cell cycle arrest. This chain is Cyclin-dependent kinase 4 inhibitor B (Cdkn2b), found in Mus musculus (Mouse).